The chain runs to 197 residues: MSERTAYVERNTLETQVKVTINLDGTGKARFAIGVPFLEHMLDQIARHGLIDLDIECNGDLHIDDHHTVEDVGITLGQAFAKAIGDKKGMTRYGHAYVPLDEALSRVVIDFSGRPGLTMHVPYTRAVVGKFDVDLFQEFFQGFVNHALVTLHIDNLRGTNTHHQIETVFKAFGRALRMAIELDPRMAGQMPSTKGCL.

It belongs to the imidazoleglycerol-phosphate dehydratase family.

It is found in the cytoplasm. It carries out the reaction D-erythro-1-(imidazol-4-yl)glycerol 3-phosphate = 3-(imidazol-4-yl)-2-oxopropyl phosphate + H2O. It functions in the pathway amino-acid biosynthesis; L-histidine biosynthesis; L-histidine from 5-phospho-alpha-D-ribose 1-diphosphate: step 6/9. The chain is Imidazoleglycerol-phosphate dehydratase from Stutzerimonas stutzeri (strain A1501) (Pseudomonas stutzeri).